The chain runs to 184 residues: MENSGGIQASLSGRYATALFGLARDEKAIDAVSASLQSLKAALTESDDFRRLTTSPLVSRDEAMKAVAATAASLGIDPLTTKFLGVLAQNRRLGQLGAVIRSFGTLSARHRGETTAEVTSAHPLTATQVKALKAKLKTQLDRDVAVDLTVDPSILGGLIVKIGSRQIDGSIRSKLNSLAIAMKG.

The protein belongs to the ATPase delta chain family. As to quaternary structure, F-type ATPases have 2 components, F(1) - the catalytic core - and F(0) - the membrane proton channel. F(1) has five subunits: alpha(3), beta(3), gamma(1), delta(1), epsilon(1). F(0) has three main subunits: a(1), b(2) and c(10-14). The alpha and beta chains form an alternating ring which encloses part of the gamma chain. F(1) is attached to F(0) by a central stalk formed by the gamma and epsilon chains, while a peripheral stalk is formed by the delta and b chains.

It is found in the cell inner membrane. Functionally, f(1)F(0) ATP synthase produces ATP from ADP in the presence of a proton or sodium gradient. F-type ATPases consist of two structural domains, F(1) containing the extramembraneous catalytic core and F(0) containing the membrane proton channel, linked together by a central stalk and a peripheral stalk. During catalysis, ATP synthesis in the catalytic domain of F(1) is coupled via a rotary mechanism of the central stalk subunits to proton translocation. This protein is part of the stalk that links CF(0) to CF(1). It either transmits conformational changes from CF(0) to CF(1) or is implicated in proton conduction. In Rhizorhabdus wittichii (strain DSM 6014 / CCUG 31198 / JCM 15750 / NBRC 105917 / EY 4224 / RW1) (Sphingomonas wittichii), this protein is ATP synthase subunit delta.